The following is a 116-amino-acid chain: uncharacterized protein (116 aa).

3 consecutive transmembrane segments (helical) span residues 5–27, 42–64, and 88–110; these read AILL…AVPC, PFVP…TAGV, and VLHG…VVAI.

It localises to the cell membrane. This is an uncharacterized protein from Archaeoglobus fulgidus (strain ATCC 49558 / DSM 4304 / JCM 9628 / NBRC 100126 / VC-16).